A 378-amino-acid chain; its full sequence is Integrator complex assembly factor WDR73 (378 aa).

WD repeat units lie at residues 73-113, 121-163, 167-205, 214-255, 266-305, and 322-371; these read DFKV…VWQV, KAVS…VVDL, KTTYTSDVSDSEELSSLQVLDADTFAFCCASGRLGLVDT, NRSP…LLDP, QCPVSVPSPDPELLRVTWAPGLKNCLAISGFDGTVQVYDA, and EPLF…VWDW.

It belongs to the WD repeat WDR73 family. As to quaternary structure, interacts with INTS9 and INTS11; the interaction is direct. Part of the multiprotein complex composed of BRAT1, WDR73, as well as integrator complex subunits INTS9 and INTS11. Expressed in kidney and brain. In the kidney, expressed in glomeruli, most probably in podocytes, and in tubules (at protein level). In the brain, expressed in the cerebellum, with high levels in Purkinje cells and their projecting axons, in the deep cerebellar nuclei and in pyramidal neurons of the cerebral cortex (at protein level). In the white matter, mainly present in astrocytes, but not in oligodendrocytes (at protein level). Also highly expressed in endothelial cells of cerebral capillaries (at protein level).

The protein localises to the cytoplasm. Its subcellular location is the cytoskeleton. It localises to the spindle. It is found in the spindle pole. The protein resides in the cleavage furrow. Functionally, component of a multiprotein complex required for the assembly of the RNA endonuclease module of the integrator complex. Associates with INTS9 and INTS11 in the cytoplasm, stabilizing the INTS9-INTS11 heterodimer and blocking the active site of INTS11. BRAT1 then joins the complex and plugs the active site of INTS11, leading to WDR73 release and nuclear import of INTS9 and INTS11. This chain is Integrator complex assembly factor WDR73, found in Homo sapiens (Human).